We begin with the raw amino-acid sequence, 40 residues long: Snaclec tokaracetin subunit beta (40 aa).

C2 and C13 are oxidised to a cystine. One can recognise a C-type lectin domain in the interval 9 to 40; the sequence is YDEHCYRVFQQKMNWEDAEKFCTQQHKGXHLX.

The protein belongs to the snaclec family. As to quaternary structure, heterodimer of subunits alpha and beta; disulfide-linked. In terms of tissue distribution, expressed by the venom gland.

Its subcellular location is the secreted. Functionally, platelet antagonist that specifically and reversibly binds to a site on platelet glycoprotein Ibalpha (GP1BA) close to or identical with the site for vWF binding. It inhibits the binding of vWF to platelets and vWF-dependent shear-induced platelet aggregation. The protein is Snaclec tokaracetin subunit beta of Protobothrops tokarensis (Tokara habu).